The sequence spans 680 residues: Protein terminal ear1 homolog (680 aa).

In terms of domain architecture, RRM spans 223 to 295 (SLVVLNSLPA…RRLVVEYTRP (73 aa)). Disordered stretches follow at residues 294 to 415 (RPSL…SWRG) and 593 to 680 (TEPV…GYTD). Composition is skewed to low complexity over residues 328-340 (PSQS…SGSG) and 379-403 (SAAA…KQSQ). Residues 404-413 (KGGGGRGGSW) show a composition bias toward gly residues. Low complexity-rich tracts occupy residues 602-621 (SPAP…CAAS) and 634-648 (SSSG…SSNA). Basic and acidic residues predominate over residues 656–666 (HGETGGDRGDD).

Highly expressed in shoot apex and inflorescence apex, at intermediate levels in roots and at low levels in leaf blade and leaf sheath.

Probable RNA-binding protein. Involved in the regular timing (plastochron) of lateral organs formation. May regulate the rate of leaf initiation and the duration of vegetative phase. Seems to be redundant to the function of PLASTOCHRON1, but to act in an independent pathway. The chain is Protein terminal ear1 homolog (PLA2) from Oryza sativa subsp. indica (Rice).